The sequence spans 255 residues: Ribonuclease HII (255 aa).

One can recognise an RNase H type-2 domain in the interval 72–255 (RLIAGVDEAG…KTFAPVQSYC (184 aa)). 3 residues coordinate a divalent metal cation: aspartate 78, glutamate 79, and aspartate 170.

The protein belongs to the RNase HII family. Mn(2+) serves as cofactor. Mg(2+) is required as a cofactor.

It localises to the cytoplasm. The enzyme catalyses Endonucleolytic cleavage to 5'-phosphomonoester.. Its function is as follows. Endonuclease that specifically degrades the RNA of RNA-DNA hybrids. In Bacillus velezensis (strain DSM 23117 / BGSC 10A6 / LMG 26770 / FZB42) (Bacillus amyloliquefaciens subsp. plantarum), this protein is Ribonuclease HII.